The primary structure comprises 738 residues: Flagellar radial spoke protein 2 (738 aa).

Arg104 carries the asymmetric dimethylarginine modification. Composition is skewed to acidic residues over residues 134–153 (PDWVAPEDDEAAAVETEDEA) and 161–182 (EGEEPPPEPEPEPEAAPEDGEG). Residues 134–189 (PDWVAPEDDEAAAVETEDEAAGGAALAEGEEPPPEPEPEPEAAPEDGEGDAPAPKI) are disordered. Arg260 bears the Asymmetric dimethylarginine mark. A disordered region spans residues 357–426 (AAAEAAAAAP…PPKPKKKKKV (70 aa)). The span at 371–415 (EGEEGEGEAPPAEEEPPAEEEAEEEEEEAEEGAEEGAEEGEEGEE) shows a compositional bias: acidic residues. Residues Arg453, Arg538, and Arg615 each carry the asymmetric dimethylarginine modification. A disordered region spans residues 674-738 (AEAGEGEAVA…SSEESKAAAE (65 aa)). The span at 689–730 (PAEAEAAPAEGEAAPPAEGEGEAQPAQEGSNSSSSSSDSSSS) shows a compositional bias: low complexity.

Belongs to the dpy-30 family. In terms of processing, asymmetrically dimethylated at Arg-104, Arg-260, Arg-453, Arg-538 and Arg-615 during flagellum resorption. Probably methylated by PRMT1.

Its subcellular location is the cytoplasm. The protein localises to the cytoskeleton. The protein resides in the flagellum axoneme. Flagellar radial spokes contribute to the regulation of dynein arm activity and thus the pattern of flagellar bending. They consist of a thin stalk, which is attached to the a subfiber of the outer doublet microtubule, and a bulbous head, which is attached to the stalk and appears to interact with the projections from the central pair of microtubules. Binds calmodulin in a calcium-dependent manner. This chain is Flagellar radial spoke protein 2, found in Chlamydomonas reinhardtii (Chlamydomonas smithii).